Reading from the N-terminus, the 334-residue chain is rRNA 2'-O-methyltransferase fibrillarin (334 aa).

Residues 1–93 are compositionally biased toward gly residues; that stretch reads MEGRGGSRGG…GGKPAAGGKP (93 aa). Residues 1–94 form a disordered region; sequence MEGRGGSRGG…GKPAAGGKPG (94 aa). Residues 184-185, 203-204, 228-229, and 248-251 each bind S-adenosyl-L-methionine; these read TT, EL, DA, and DVAQ.

This sequence belongs to the methyltransferase superfamily. Fibrillarin family. As to quaternary structure, component of box C/D small nucleolar ribonucleoprotein (snoRNP) particles. It is associated with the U3, U8 and U13 small nuclear RNAs. Part of the small subunit (SSU) processome, composed of more than 70 proteins and the RNA chaperone small nucleolar RNA (snoRNA) U3. In terms of processing, by homology to other fibrillarins, some or all of the N-terminal domain arginines are modified to asymmetric dimethylarginine (DMA).

Its subcellular location is the nucleus. It is found in the nucleolus. It catalyses the reaction L-glutaminyl-[histone H2A] + S-adenosyl-L-methionine = N(5)-methyl-L-glutaminyl-[histone H2A] + S-adenosyl-L-homocysteine + H(+). S-adenosyl-L-methionine-dependent methyltransferase that has the ability to methylate both RNAs and proteins. Involved in pre-rRNA processing. Utilizes the methyl donor S-adenosyl-L-methionine to catalyze the site-specific 2'-hydroxyl methylation of ribose moieties in pre-ribosomal RNA. Site specificity is provided by a guide RNA that base pairs with the substrate. Methylation occurs at a characteristic distance from the sequence involved in base pairing with the guide RNA. Also acts as a protein methyltransferase by mediating methylation of 'Gln-105' of histone H2A (H2AQ105me), a modification that impairs binding of the FACT complex and is specifically present at 35S ribosomal DNA locus. Part of the small subunit (SSU) processome, first precursor of the small eukaryotic ribosomal subunit. During the assembly of the SSU processome in the nucleolus, many ribosome biogenesis factors, an RNA chaperone and ribosomal proteins associate with the nascent pre-rRNA and work in concert to generate RNA folding, modifications, rearrangements and cleavage as well as targeted degradation of pre-ribosomal RNA by the RNA exosome. The polypeptide is rRNA 2'-O-methyltransferase fibrillarin (fbl) (Dictyostelium discoideum (Social amoeba)).